A 353-amino-acid polypeptide reads, in one-letter code: UPF0421 protein YgaE (353 aa).

A run of 4 helical transmembrane segments spans residues 20 to 40 (LASW…IFAI), 67 to 87 (VFGL…VIVI), 103 to 123 (LVTV…FALI), and 125 to 145 (TSTV…FLPP).

It belongs to the UPF0421 family.

The protein resides in the cell membrane. The sequence is that of UPF0421 protein YgaE (ygaE) from Bacillus subtilis (strain 168).